Here is a 159-residue protein sequence, read N- to C-terminus: Ribose-5-phosphate isomerase B (159 aa).

Residues 8–9 (DH) and 67–71 (GSGNG) contribute to the D-ribulose 5-phosphate site. Glu-72 serves as the catalytic Proton acceptor. His-99 acts as the Proton donor in catalysis. Asn-100, Arg-110, Arg-134, and Arg-138 together coordinate D-ribulose 5-phosphate.

Belongs to the LacAB/RpiB family. In terms of assembly, homodimer.

It catalyses the reaction aldehydo-D-ribose 5-phosphate = D-ribulose 5-phosphate. It functions in the pathway carbohydrate degradation; pentose phosphate pathway; D-ribose 5-phosphate from D-ribulose 5-phosphate (non-oxidative stage): step 1/1. Functionally, catalyzes the interconversion of ribulose-5-P and ribose-5-P. This chain is Ribose-5-phosphate isomerase B, found in Mycolicibacterium paratuberculosis (strain ATCC BAA-968 / K-10) (Mycobacterium paratuberculosis).